A 496-amino-acid chain; its full sequence is Galactose/methyl galactoside import ATP-binding protein MglA (496 aa).

2 consecutive ABC transporter domains span residues 5-240 (LTIR…VGRT) and 243-496 (KRFP…ARYL). Position 37 to 44 (37 to 44 (GENGAGKS)) interacts with ATP.

This sequence belongs to the ABC transporter superfamily. Galactose/methyl galactoside importer (TC 3.A.1.2.3) family. In terms of assembly, the complex is composed of one ATP-binding protein (MglA), two transmembrane proteins (MglC) and a solute-binding protein (MglB).

Its subcellular location is the cell inner membrane. The catalysed reaction is D-galactose(out) + ATP + H2O = D-galactose(in) + ADP + phosphate + H(+). The enzyme catalyses methyl beta-D-galactoside(out) + ATP + H2O = methyl beta-D-galactoside(in) + ADP + phosphate + H(+). Functionally, part of the ABC transporter complex MglABC involved in galactose/methyl galactoside import. Responsible for energy coupling to the transport system. This chain is Galactose/methyl galactoside import ATP-binding protein MglA, found in Treponema pallidum (strain Nichols).